The sequence spans 629 residues: tRNA uridine 5-carboxymethylaminomethyl modification enzyme MnmG (629 aa).

Residues 13–18 (GGGHAG), Val-125, and Ser-180 each bind FAD. Position 273 to 287 (273 to 287 (GPRYCPSIEDKVMRF)) interacts with NAD(+). FAD is bound at residue Gln-370.

It belongs to the MnmG family. Homodimer. Heterotetramer of two MnmE and two MnmG subunits. Requires FAD as cofactor.

The protein resides in the cytoplasm. Functionally, NAD-binding protein involved in the addition of a carboxymethylaminomethyl (cmnm) group at the wobble position (U34) of certain tRNAs, forming tRNA-cmnm(5)s(2)U34. The chain is tRNA uridine 5-carboxymethylaminomethyl modification enzyme MnmG from Shigella sonnei (strain Ss046).